The sequence spans 423 residues: Gamma-glutamyl phosphate reductase 2 (423 aa).

The protein belongs to the gamma-glutamyl phosphate reductase family.

The protein resides in the cytoplasm. It carries out the reaction L-glutamate 5-semialdehyde + phosphate + NADP(+) = L-glutamyl 5-phosphate + NADPH + H(+). It participates in amino-acid biosynthesis; L-proline biosynthesis; L-glutamate 5-semialdehyde from L-glutamate: step 2/2. Catalyzes the NADPH-dependent reduction of L-glutamate 5-phosphate into L-glutamate 5-semialdehyde and phosphate. The product spontaneously undergoes cyclization to form 1-pyrroline-5-carboxylate. The sequence is that of Gamma-glutamyl phosphate reductase 2 from Bacillus licheniformis (strain ATCC 14580 / DSM 13 / JCM 2505 / CCUG 7422 / NBRC 12200 / NCIMB 9375 / NCTC 10341 / NRRL NRS-1264 / Gibson 46).